The following is a 269-amino-acid chain: 5'-nucleotidase SurE (269 aa).

A divalent metal cation is bound by residues aspartate 11, aspartate 12, serine 43, and asparagine 101.

Belongs to the SurE nucleotidase family. The cofactor is a divalent metal cation.

It localises to the cytoplasm. It carries out the reaction a ribonucleoside 5'-phosphate + H2O = a ribonucleoside + phosphate. In terms of biological role, nucleotidase that shows phosphatase activity on nucleoside 5'-monophosphates. This is 5'-nucleotidase SurE from Prochlorococcus marinus subsp. pastoris (strain CCMP1986 / NIES-2087 / MED4).